Consider the following 430-residue polypeptide: Serine--tRNA ligase (430 aa).

An L-serine-binding site is contributed by 231–233 (TSE). Residue 262 to 264 (RSE) coordinates ATP. Glu285 contacts L-serine. Residue 349–352 (EISS) coordinates ATP. Residue Ser385 participates in L-serine binding.

Belongs to the class-II aminoacyl-tRNA synthetase family. Type-1 seryl-tRNA synthetase subfamily. As to quaternary structure, homodimer. The tRNA molecule binds across the dimer.

Its subcellular location is the cytoplasm. It carries out the reaction tRNA(Ser) + L-serine + ATP = L-seryl-tRNA(Ser) + AMP + diphosphate + H(+). The enzyme catalyses tRNA(Sec) + L-serine + ATP = L-seryl-tRNA(Sec) + AMP + diphosphate + H(+). It functions in the pathway aminoacyl-tRNA biosynthesis; selenocysteinyl-tRNA(Sec) biosynthesis; L-seryl-tRNA(Sec) from L-serine and tRNA(Sec): step 1/1. Functionally, catalyzes the attachment of serine to tRNA(Ser). Is also able to aminoacylate tRNA(Sec) with serine, to form the misacylated tRNA L-seryl-tRNA(Sec), which will be further converted into selenocysteinyl-tRNA(Sec). The polypeptide is Serine--tRNA ligase (Jannaschia sp. (strain CCS1)).